Reading from the N-terminus, the 388-residue chain is Succinate--CoA ligase [ADP-forming] subunit beta (388 aa).

One can recognise an ATP-grasp domain in the interval 9-244; the sequence is KQIFAEYQLP…PSQEDPREAL (236 aa). ATP-binding positions include Lys-46, 53–55, Glu-99, Ser-102, and Glu-107; that span reads GRG. Asn-199 and Asp-213 together coordinate Mg(2+). Substrate-binding positions include Asn-264 and 321–323; that span reads GIV.

This sequence belongs to the succinate/malate CoA ligase beta subunit family. Heterotetramer of two alpha and two beta subunits. Mg(2+) serves as cofactor.

It carries out the reaction succinate + ATP + CoA = succinyl-CoA + ADP + phosphate. It catalyses the reaction GTP + succinate + CoA = succinyl-CoA + GDP + phosphate. It functions in the pathway carbohydrate metabolism; tricarboxylic acid cycle; succinate from succinyl-CoA (ligase route): step 1/1. Its function is as follows. Succinyl-CoA synthetase functions in the citric acid cycle (TCA), coupling the hydrolysis of succinyl-CoA to the synthesis of either ATP or GTP and thus represents the only step of substrate-level phosphorylation in the TCA. The beta subunit provides nucleotide specificity of the enzyme and binds the substrate succinate, while the binding sites for coenzyme A and phosphate are found in the alpha subunit. The chain is Succinate--CoA ligase [ADP-forming] subunit beta from Pasteurella multocida (strain Pm70).